A 156-amino-acid chain; its full sequence is Cyanate hydratase (156 aa).

Catalysis depends on residues Arg96, Glu99, and Ser122.

It belongs to the cyanase family.

It carries out the reaction cyanate + hydrogencarbonate + 3 H(+) = NH4(+) + 2 CO2. In terms of biological role, catalyzes the reaction of cyanate with bicarbonate to produce ammonia and carbon dioxide. This is Cyanate hydratase from Burkholderia cenocepacia (strain ATCC BAA-245 / DSM 16553 / LMG 16656 / NCTC 13227 / J2315 / CF5610) (Burkholderia cepacia (strain J2315)).